The primary structure comprises 385 residues: tRNA (guanine(26)-N(2))-dimethyltransferase (385 aa).

The 379-residue stretch at Met1–Thr379 folds into the Trm1 methyltransferase domain. Residues Arg37, Arg67, Asp82, Asp108, and Ala109 each contribute to the S-adenosyl-L-methionine site. 4 residues coordinate Zn(2+): Cys247, Cys250, Cys267, and Cys270.

This sequence belongs to the class I-like SAM-binding methyltransferase superfamily. Trm1 family.

It carries out the reaction guanosine(26) in tRNA + 2 S-adenosyl-L-methionine = N(2)-dimethylguanosine(26) in tRNA + 2 S-adenosyl-L-homocysteine + 2 H(+). In terms of biological role, dimethylates a single guanine residue at position 26 of a number of tRNAs using S-adenosyl-L-methionine as donor of the methyl groups. The sequence is that of tRNA (guanine(26)-N(2))-dimethyltransferase from Haloquadratum walsbyi (strain DSM 16790 / HBSQ001).